Consider the following 118-residue polypeptide: HTH-type transcriptional regulator CmtR (118 aa).

The 95-residue stretch at threonine 3 to aspartate 97 folds into the HTH arsR-type domain. Cysteine 57, cysteine 61, and cysteine 102 together coordinate Cd(2+).

Homodimer.

In terms of biological role, metal-responsive transcriptional repressor for the cmt operon. Binding of cadmium or lead causes the repressor to dissociate from the DNA. The sequence is that of HTH-type transcriptional regulator CmtR (cmtR) from Mycobacterium bovis (strain ATCC BAA-935 / AF2122/97).